The primary structure comprises 1047 residues: Atrial natriuretic peptide receptor 2 (1047 aa).

The N-terminal stretch at 1–16 (MALPSLLLVVAALAGG) is a signal peptide. At 17-458 (VRPPGARNLT…DKTPLSTLAI (442 aa)) the chain is on the extracellular side. N-linked (GlcNAc...) asparagine glycosylation is found at N24 and N35. A disulfide bridge links C75 with C101. N-linked (GlcNAc...) asparagine glycans are attached at residues N161, N195, N244, N277, and N349. Residues 459-478 (VALGTGVTFIMFGVSSFLIF) form a helical membrane-spanning segment. Over 479–1047 (RKLMLEKELA…GEQKGPPGLL (569 aa)) the chain is Cytoplasmic. Phosphoserine is present on S513. Residues 513 to 786 (SRLTLSLRGS…PDFGQIKGFI (274 aa)) enclose the Protein kinase domain. T516 carries the post-translational modification Phosphothreonine. 4 positions are modified to phosphoserine: S518, S522, S523, and S526. Position 529 is a phosphothreonine (T529). The 131-residue stretch at 861 to 991 (TIYFSDIVGF…DTVNTASRME (131 aa)) folds into the Guanylate cyclase domain.

Belongs to the adenylyl cyclase class-4/guanylyl cyclase family. Phosphorylated. Phosphorylation of the protein kinase-like domain is required for full activation by CNP. In terms of processing, glycosylated. In terms of tissue distribution, widely expressed. Expressed in the columnar proliferating and prehypertrophic chondrocyte layers of the tibia.

The protein resides in the cell membrane. It catalyses the reaction GTP = 3',5'-cyclic GMP + diphosphate. In terms of biological role, receptor for the C-type natriuretic peptide NPPC/CNP hormone. Has guanylate cyclase activity upon binding of its ligand. May play a role in the regulation of skeletal growth. This is Atrial natriuretic peptide receptor 2 (Npr2) from Mus musculus (Mouse).